Reading from the N-terminus, the 960-residue chain is Leucine--tRNA ligase (960 aa).

The short motif at 71 to 82 (PYPSGAGLHVGH) is the 'HIGH' region element. The 'KMSKS' region signature appears at 729-733 (KMGKS). Lysine 732 is an ATP binding site.

Belongs to the class-I aminoacyl-tRNA synthetase family.

It localises to the cytoplasm. The enzyme catalyses tRNA(Leu) + L-leucine + ATP = L-leucyl-tRNA(Leu) + AMP + diphosphate. The polypeptide is Leucine--tRNA ligase (Corynebacterium diphtheriae (strain ATCC 700971 / NCTC 13129 / Biotype gravis)).